We begin with the raw amino-acid sequence, 285 residues long: Shikimate dehydrogenase (NADP(+)) (285 aa).

Residues 19-21 (SLS) and Thr66 contribute to the shikimate site. Lys70 acts as the Proton acceptor in catalysis. Shikimate is bound by residues Asn91 and Asp107. NADP(+)-binding positions include 129–133 (GSGGA) and Leu228. Tyr230 lines the shikimate pocket. Gly251 is an NADP(+) binding site.

Belongs to the shikimate dehydrogenase family. Homodimer.

The enzyme catalyses shikimate + NADP(+) = 3-dehydroshikimate + NADPH + H(+). Its pathway is metabolic intermediate biosynthesis; chorismate biosynthesis; chorismate from D-erythrose 4-phosphate and phosphoenolpyruvate: step 4/7. Involved in the biosynthesis of the chorismate, which leads to the biosynthesis of aromatic amino acids. Catalyzes the reversible NADPH linked reduction of 3-dehydroshikimate (DHSA) to yield shikimate (SA). This is Shikimate dehydrogenase (NADP(+)) from Prochlorococcus marinus (strain MIT 9515).